A 143-amino-acid polypeptide reads, in one-letter code: Calcitonin (143 aa).

The N-terminal stretch at 1–25 (MGFGKSSPFLAFSILVLCQAGSLQA) is a signal peptide. A propeptide spanning residues 26–84 (TPLRSALETLPDPGALSEKEGRLLLAALVKAYVQRKTNELEQEEEQEETEDSSLDSSRA) is cleaved from the precursor. Ser42 carries the phosphoserine modification. Residues 62 to 86 (TNELEQEEEQEETEDSSLDSSRAKR) are disordered. The segment covering 65–78 (LEQEEEQEETEDSS) has biased composition (acidic residues). Cys87 and Cys93 are joined by a disulfide. A disordered region spans residues 112–143 (GFGPETPGKKRDIANSLEKDLSSHFGVPTDAN). Pro118 is modified (proline amide). Residues 118–133 (PGKKRDIANSLEKDLS) show a composition bias toward basic and acidic residues. A propeptide spanning residues 122 to 143 (RDIANSLEKDLSSHFGVPTDAN) is cleaved from the precursor.

Belongs to the calcitonin family.

The protein localises to the secreted. In terms of biological role, calcitonin is a peptide hormone that causes a rapid but short-lived drop in the level of calcium and phosphate in blood by promoting the incorporation of those ions in the bones. Calcitonin function is mediated by the calcitonin receptor/CALCR and the CALCR-RAMP2 (AMYR2) receptor complex. The polypeptide is Calcitonin (CALCA) (Ovis aries (Sheep)).